The primary structure comprises 271 residues: Probable WRKY transcription factor 69 (271 aa).

Disordered regions lie at residues 1–47 and 130–166; these read MHRR…NVEK and PSSS…TVTA. Acidic residues predominate over residues 9-18; the sequence is ESDDEEDETY. Residues 64-130 constitute a DNA-binding region (WRKY); the sequence is GEVYPPSDSW…YACDHNHPFP (67 aa).

It belongs to the WRKY group II-e family.

It localises to the nucleus. Functionally, transcription factor. Interacts specifically with the W box (5'-(T)TGAC[CT]-3'), a frequently occurring elicitor-responsive cis-acting element. This is Probable WRKY transcription factor 69 (WRKY69) from Arabidopsis thaliana (Mouse-ear cress).